Here is a 55-residue protein sequence, read N- to C-terminus: Large ribosomal subunit protein bL33 (55 aa).

This sequence belongs to the bacterial ribosomal protein bL33 family.

This Dehalococcoides mccartyi (strain ATCC BAA-2100 / JCM 16839 / KCTC 5957 / BAV1) protein is Large ribosomal subunit protein bL33.